The primary structure comprises 257 residues: UPF0259 membrane protein WIGBR3650 (257 aa).

6 helical membrane-spanning segments follow: residues 23–43 (IIFF…IFLP), 89–109 (LSSL…INTI), 122–142 (IILS…ISFL), 148–168 (ALML…PILI), 190–210 (IKTV…ILVI), and 223–243 (VKIF…IYMY).

The protein belongs to the UPF0259 family.

The protein resides in the cell membrane. The polypeptide is UPF0259 membrane protein WIGBR3650 (Wigglesworthia glossinidia brevipalpis).